The chain runs to 247 residues: MSKEPDRLFAQPLPQVPDFAFNEDVVRVFPDMIKRSVPGYPAIVENLGVLAAQFAQPDTVLYDLGCSLGAVTQALRRHVRSDGCEVIAIDNSTAMVERCREYLNAQNSMFQELLPVQVIEGDILALAFKPASVVALNFTLQFVAPEQRLALLGRIRGALVPGGALILSEKLRFNDEQEHALLTDLHIAFKRANGYSDLEIAQKRSAIENVMKPDSLEEHRQRLLAAGFSKVVPWFQCLNFASLIALP.

S-adenosyl-L-methionine contacts are provided by residues tyrosine 40, 65–67, 90–91, 122–123, asparagine 137, and arginine 204; these read GCS, DN, and DI.

It belongs to the class I-like SAM-binding methyltransferase superfamily. Cx-SAM synthase family. As to quaternary structure, homodimer.

It catalyses the reaction prephenate + S-adenosyl-L-methionine = carboxy-S-adenosyl-L-methionine + 3-phenylpyruvate + H2O. Its function is as follows. Catalyzes the conversion of S-adenosyl-L-methionine (SAM) to carboxy-S-adenosyl-L-methionine (Cx-SAM). In Pseudomonas syringae pv. tomato (strain ATCC BAA-871 / DC3000), this protein is Carboxy-S-adenosyl-L-methionine synthase.